The following is a 373-amino-acid chain: 5-amino-6-(5-phospho-D-ribitylamino)uracil phosphatase, chloroplastic (373 aa).

Belongs to the HAD-like hydrolase superfamily. DOG/GPP family. Homodimer. Mg(2+) serves as cofactor.

Its subcellular location is the plastid. It is found in the chloroplast. It catalyses the reaction 5-amino-6-(5-phospho-D-ribitylamino)uracil + H2O = 5-amino-6-(D-ribitylamino)uracil + phosphate. Functionally, catalyzes the dephosphorylation of 5-amino-6-(5-phospho-D-ribitylamino)uracil, also known as ARPP, but has no activity toward flavin mononucleotide (FMN). In Arabidopsis thaliana (Mouse-ear cress), this protein is 5-amino-6-(5-phospho-D-ribitylamino)uracil phosphatase, chloroplastic.